We begin with the raw amino-acid sequence, 446 residues long: Chromosomal replication initiator protein DnaA (446 aa).

Residues 1–92 (MENISDLWNS…SQAEEEIDLP (92 aa)) form a domain I, interacts with DnaA modulators region. The tract at residues 87–107 (EEIDLPPSKPNSAQDDSNHLP) is disordered. Positions 93-109 (PSKPNSAQDDSNHLPQS) are domain II. Polar residues predominate over residues 96–107 (PNSAQDDSNHLP). The tract at residues 110–326 (MLNPKYTFDT…GALIRVVAYS (217 aa)) is domain III, AAA+ region. ATP-binding residues include glycine 154, glycine 156, lysine 157, and threonine 158. A domain IV, binds dsDNA region spans residues 327–446 (SLINKDINAD…QVEEINDILK (120 aa)).

It belongs to the DnaA family. As to quaternary structure, oligomerizes as a right-handed, spiral filament on DNA at oriC.

The protein localises to the cytoplasm. In terms of biological role, plays an essential role in the initiation and regulation of chromosomal replication. ATP-DnaA binds to the origin of replication (oriC) to initiate formation of the DNA replication initiation complex once per cell cycle. Binds the DnaA box (a 9 base pair repeat at the origin) and separates the double-stranded (ds)DNA. Forms a right-handed helical filament on oriC DNA; dsDNA binds to the exterior of the filament while single-stranded (ss)DNA is stabiized in the filament's interior. The ATP-DnaA-oriC complex binds and stabilizes one strand of the AT-rich DNA unwinding element (DUE), permitting loading of DNA polymerase. After initiation quickly degrades to an ADP-DnaA complex that is not apt for DNA replication. Binds acidic phospholipids. This chain is Chromosomal replication initiator protein DnaA, found in Bacillus cereus (strain ATCC 10987 / NRS 248).